The following is a 140-amino-acid chain: Gonadotropin subunit beta-2 (140 aa).

The first 23 residues, 1–23, serve as a signal peptide directing secretion; it reads MGTPVKILVVLFSVIVLLAVAQS. Intrachain disulfides connect Cys29–Cys77, Cys43–Cys92, Cys46–Cys130, Cys54–Cys108, Cys58–Cys110, and Cys113–Cys120. N-linked (GlcNAc...) asparagine glycosylation occurs at Asn33.

Belongs to the glycoprotein hormones subunit beta family. As to quaternary structure, heterodimer of an alpha and a beta chain.

The protein resides in the secreted. Its function is as follows. Involved in gametogenesis and steroidogenesis. The protein is Gonadotropin subunit beta-2 (cgbb) of Carassius auratus (Goldfish).